The sequence spans 319 residues: Sulfate adenylyltransferase subunit 2 (319 aa).

Disordered stretches follow at residues 1 to 22 (MNPG…TRRP) and 296 to 319 (RGAT…EGYF).

This sequence belongs to the PAPS reductase family. CysD subfamily.

The catalysed reaction is sulfate + ATP + H(+) = adenosine 5'-phosphosulfate + diphosphate. It participates in antibiotic biosynthesis; mitomycin C biosynthesis. With CysN forms the ATP sulfurylase (ATPS) that catalyzes the adenylation of sulfate producing adenosine 5'-phosphosulfate (APS) and diphosphate, the first enzymatic step in sulfur assimilation pathway. APS synthesis involves the formation of a high-energy phosphoric-sulfuric acid anhydride bond driven by GTP hydrolysis by CysN coupled to ATP hydrolysis by CysD. The protein is Sulfate adenylyltransferase subunit 2 (mmcV) of Streptomyces lavendulae.